A 47-amino-acid polypeptide reads, in one-letter code: Large ribosomal subunit protein bL34 (47 aa).

The protein belongs to the bacterial ribosomal protein bL34 family.

The sequence is that of Large ribosomal subunit protein bL34 from Mycobacterium tuberculosis (strain ATCC 25177 / H37Ra).